Here is a 75-residue protein sequence, read N- to C-terminus: UPF0346 protein LEUM_0763 (75 aa).

The protein belongs to the UPF0346 family.

The sequence is that of UPF0346 protein LEUM_0763 from Leuconostoc mesenteroides subsp. mesenteroides (strain ATCC 8293 / DSM 20343 / BCRC 11652 / CCM 1803 / JCM 6124 / NCDO 523 / NBRC 100496 / NCIMB 8023 / NCTC 12954 / NRRL B-1118 / 37Y).